The chain runs to 506 residues: tRNA-2-methylthio-N(6)-dimethylallyladenosine synthase (506 aa).

Positions 14–132 (KSYEVRTYGC…LPVLLERARV (119 aa)) constitute an MTTase N-terminal domain. Residues Cys-23, Cys-61, Cys-95, Cys-169, Cys-173, and Cys-176 each coordinate [4Fe-4S] cluster. In terms of domain architecture, Radical SAM core spans 155–386 (RESAYAAWVS…ALQEQISWDE (232 aa)). Positions 388 to 456 (KKQVGRTLDV…PHHLLAEGTP (69 aa)) constitute a TRAM domain.

This sequence belongs to the methylthiotransferase family. MiaB subfamily. In terms of assembly, monomer. [4Fe-4S] cluster is required as a cofactor.

The protein resides in the cytoplasm. It catalyses the reaction N(6)-dimethylallyladenosine(37) in tRNA + (sulfur carrier)-SH + AH2 + 2 S-adenosyl-L-methionine = 2-methylsulfanyl-N(6)-dimethylallyladenosine(37) in tRNA + (sulfur carrier)-H + 5'-deoxyadenosine + L-methionine + A + S-adenosyl-L-homocysteine + 2 H(+). In terms of biological role, catalyzes the methylthiolation of N6-(dimethylallyl)adenosine (i(6)A), leading to the formation of 2-methylthio-N6-(dimethylallyl)adenosine (ms(2)i(6)A) at position 37 in tRNAs that read codons beginning with uridine. This Streptomyces griseus subsp. griseus (strain JCM 4626 / CBS 651.72 / NBRC 13350 / KCC S-0626 / ISP 5235) protein is tRNA-2-methylthio-N(6)-dimethylallyladenosine synthase.